Here is a 73-residue protein sequence, read N- to C-terminus: UPF0435 protein BH2488 (73 aa).

It belongs to the UPF0435 family.

The polypeptide is UPF0435 protein BH2488 (Halalkalibacterium halodurans (strain ATCC BAA-125 / DSM 18197 / FERM 7344 / JCM 9153 / C-125) (Bacillus halodurans)).